Here is a 537-residue protein sequence, read N- to C-terminus: Methylmalonate-semialdehyde/malonate-semialdehyde dehydrogenase [acylating], mitochondrial (537 aa).

The N-terminal 34 residues, M1 to F34, are a transit peptide targeting the mitochondrion. 4 positions are modified to N6-acetyllysine; alternate: K49, K54, K57, and K78. N6-succinyllysine; alternate is present on residues K49, K54, K57, and K78. At K89 the chain carries N6-acetyllysine. K119 and K131 each carry N6-acetyllysine; alternate. N6-succinyllysine; alternate is present on residues K119 and K131. Residues A185, F187, K211, E214, R215, and S264 each coordinate NAD(+). S264 bears the Phosphoserine mark. The residue at position 300 (K300) is an N6-acetyllysine. C319 functions as the Nucleophile in the catalytic mechanism. An N6-acetyllysine mark is found at K332 and K333. K366 and K378 each carry N6-acetyllysine; alternate. Residues K366 and K378 each carry the N6-succinyllysine; alternate modification. S382 carries the post-translational modification Phosphoserine. K393 carries the post-translational modification N6-succinyllysine. Residue E419 participates in NAD(+) binding. K502 carries the N6-acetyllysine modification. N6-succinyllysine is present on K519.

The protein belongs to the aldehyde dehydrogenase family. As to quaternary structure, homodimer. In terms of processing, the N-terminus is blocked.

It localises to the mitochondrion. It catalyses the reaction 2-methyl-3-oxopropanoate + NAD(+) + CoA + H2O = propanoyl-CoA + hydrogencarbonate + NADH + H(+). The catalysed reaction is 3-oxopropanoate + NAD(+) + CoA + H2O = hydrogencarbonate + acetyl-CoA + NADH + H(+). The enzyme catalyses (R)-2-methyl-3-oxopropanoate + NAD(+) + CoA + H2O = propanoyl-CoA + hydrogencarbonate + NADH + H(+). It carries out the reaction (S)-2-methyl-3-oxopropanoate + NAD(+) + CoA + H2O = propanoyl-CoA + hydrogencarbonate + NADH + H(+). Malonate and methylmalonate semialdehyde dehydrogenase involved in the catabolism of valine, thymine, and compounds catabolized by way of beta-alanine, including uracil and cytidine. The protein is Methylmalonate-semialdehyde/malonate-semialdehyde dehydrogenase [acylating], mitochondrial (ALDH6A1) of Bos taurus (Bovine).